The chain runs to 161 residues: MDFRIGQGYDVHQLVEGRPLIIGGVTIPYERGLLGHSDADVLLHAITDALFGAAALGDIGRHFSDTDAAFKGADSRVLLRECVARINAAGFTIQNVDSTVIAQAPKLAPHIDGMRANIAADLGLPLDRVNVKAKTNEKLGYLGRGEGIEAQAAALLVKQGG.

2 residues coordinate a divalent metal cation: Asp10 and His12. Residues 10 to 12 (DVH) and 36 to 37 (HS) contribute to the 4-CDP-2-C-methyl-D-erythritol 2-phosphate site. Residue His44 participates in a divalent metal cation binding. 4-CDP-2-C-methyl-D-erythritol 2-phosphate-binding positions include 58–60 (DIG), 63–67 (FSDTD), and Arg144.

This sequence belongs to the IspF family. As to quaternary structure, homotrimer. Requires a divalent metal cation as cofactor.

The catalysed reaction is 4-CDP-2-C-methyl-D-erythritol 2-phosphate = 2-C-methyl-D-erythritol 2,4-cyclic diphosphate + CMP. The protein operates within isoprenoid biosynthesis; isopentenyl diphosphate biosynthesis via DXP pathway; isopentenyl diphosphate from 1-deoxy-D-xylulose 5-phosphate: step 4/6. In terms of biological role, involved in the biosynthesis of isopentenyl diphosphate (IPP) and dimethylallyl diphosphate (DMAPP), two major building blocks of isoprenoid compounds. Catalyzes the conversion of 4-diphosphocytidyl-2-C-methyl-D-erythritol 2-phosphate (CDP-ME2P) to 2-C-methyl-D-erythritol 2,4-cyclodiphosphate (ME-CPP) with a corresponding release of cytidine 5-monophosphate (CMP). The protein is 2-C-methyl-D-erythritol 2,4-cyclodiphosphate synthase of Burkholderia lata (strain ATCC 17760 / DSM 23089 / LMG 22485 / NCIMB 9086 / R18194 / 383).